The following is a 593-amino-acid chain: 2-succinyl-5-enolpyruvyl-6-hydroxy-3-cyclohexene-1-carboxylate synthase (593 aa).

The protein belongs to the TPP enzyme family. MenD subfamily. In terms of assembly, homodimer. The cofactor is Mg(2+). Mn(2+) is required as a cofactor. Requires thiamine diphosphate as cofactor.

The enzyme catalyses isochorismate + 2-oxoglutarate + H(+) = 5-enolpyruvoyl-6-hydroxy-2-succinyl-cyclohex-3-ene-1-carboxylate + CO2. Its pathway is quinol/quinone metabolism; 1,4-dihydroxy-2-naphthoate biosynthesis; 1,4-dihydroxy-2-naphthoate from chorismate: step 2/7. The protein operates within quinol/quinone metabolism; menaquinone biosynthesis. Its function is as follows. Catalyzes the thiamine diphosphate-dependent decarboxylation of 2-oxoglutarate and the subsequent addition of the resulting succinic semialdehyde-thiamine pyrophosphate anion to isochorismate to yield 2-succinyl-5-enolpyruvyl-6-hydroxy-3-cyclohexene-1-carboxylate (SEPHCHC). The chain is 2-succinyl-5-enolpyruvyl-6-hydroxy-3-cyclohexene-1-carboxylate synthase from Pelodictyon phaeoclathratiforme (strain DSM 5477 / BU-1).